A 336-amino-acid chain; its full sequence is Biotin synthase (336 aa).

Residues 48–277 (VFGDEVEFCS…QAELRLCGGR (230 aa)) enclose the Radical SAM core domain. 3 residues coordinate [4Fe-4S] cluster: cysteine 66, cysteine 70, and cysteine 73. Cysteine 110, cysteine 142, cysteine 202, and arginine 272 together coordinate [2Fe-2S] cluster.

This sequence belongs to the radical SAM superfamily. Biotin synthase family. As to quaternary structure, homodimer. [4Fe-4S] cluster is required as a cofactor. [2Fe-2S] cluster serves as cofactor.

The catalysed reaction is (4R,5S)-dethiobiotin + (sulfur carrier)-SH + 2 reduced [2Fe-2S]-[ferredoxin] + 2 S-adenosyl-L-methionine = (sulfur carrier)-H + biotin + 2 5'-deoxyadenosine + 2 L-methionine + 2 oxidized [2Fe-2S]-[ferredoxin]. It functions in the pathway cofactor biosynthesis; biotin biosynthesis; biotin from 7,8-diaminononanoate: step 2/2. Functionally, catalyzes the conversion of dethiobiotin (DTB) to biotin by the insertion of a sulfur atom into dethiobiotin via a radical-based mechanism. The protein is Biotin synthase of Persephonella marina (strain DSM 14350 / EX-H1).